The sequence spans 288 residues: Probable pectinesterase 56 (288 aa).

A signal peptide spans 1 to 27 (MAMTSTMQLLVLSFLVIASLFLGATVA). N-linked (GlcNAc...) asparagine glycosylation is found at N55 and N95. T120 and Q150 together coordinate substrate. The active-site Proton donor is the D173. Catalysis depends on D194, which acts as the Nucleophile. An N-linked (GlcNAc...) asparagine glycan is attached at N242. Residues R262 and W264 each contribute to the substrate site.

It belongs to the pectinesterase family.

It is found in the secreted. It localises to the cell wall. It catalyses the reaction [(1-&gt;4)-alpha-D-galacturonosyl methyl ester](n) + n H2O = [(1-&gt;4)-alpha-D-galacturonosyl](n) + n methanol + n H(+). The protein operates within glycan metabolism; pectin degradation; 2-dehydro-3-deoxy-D-gluconate from pectin: step 1/5. Functionally, acts in the modification of cell walls via demethylesterification of cell wall pectin. This is Probable pectinesterase 56 (PME56) from Arabidopsis thaliana (Mouse-ear cress).